Consider the following 54-residue polypeptide: Large ribosomal subunit protein bL33B (54 aa).

It belongs to the bacterial ribosomal protein bL33 family.

The polypeptide is Large ribosomal subunit protein bL33B (Myxococcus xanthus (strain DK1622)).